The primary structure comprises 197 residues: Lipid A acyltransferase PagP (197 aa).

The N-terminal stretch at 1–24 (MMFFKRTILACTVALLFPALPSYA) is a signal peptide. Residues histidine 69, aspartate 112, and serine 113 contribute to the active site.

It belongs to the lipid A palmitoyltransferase family. In terms of assembly, homodimer.

It is found in the cell outer membrane. It catalyses the reaction a lipid A + a 1,2-diacyl-sn-glycero-3-phosphocholine = a hepta-acyl lipid A + a 2-acyl-sn-glycero-3-phosphocholine. The catalysed reaction is a lipid IVA + a 1,2-diacyl-sn-glycero-3-phosphocholine = a lipid IVB + a 2-acyl-sn-glycero-3-phosphocholine. The enzyme catalyses a lipid IIA + a 1,2-diacyl-sn-glycero-3-phosphocholine = a lipid IIB + a 2-acyl-sn-glycero-3-phosphocholine. In terms of biological role, transfers a fatty acid residue from the sn-1 position of a phospholipid to the N-linked hydroxyfatty acid chain on the proximal unit of lipid A or its precursors. The chain is Lipid A acyltransferase PagP from Serratia proteamaculans (strain 568).